We begin with the raw amino-acid sequence, 294 residues long: Elongation factor Ts (294 aa).

Positions 80-83 (TDFV) are involved in Mg(2+) ion dislocation from EF-Tu.

This sequence belongs to the EF-Ts family.

The protein resides in the cytoplasm. Functionally, associates with the EF-Tu.GDP complex and induces the exchange of GDP to GTP. It remains bound to the aminoacyl-tRNA.EF-Tu.GTP complex up to the GTP hydrolysis stage on the ribosome. The sequence is that of Elongation factor Ts from Listeria innocua serovar 6a (strain ATCC BAA-680 / CLIP 11262).